The primary structure comprises 1338 residues: Nonribosomal peptide synthetase astA (1338 aa).

Positions 22-52 (IAVVSGDIPSPHPKNEPSQTSTLHIPRDSDL) are disordered. The interval 271 to 681 (FQARCRQNPS…GRKGAEVKLR (411 aa)) is adenylation. A Carrier domain is found at 820–893 (TPVEIIIHDA…SLAEKCSAGG (74 aa)). Position 854 is an O-(pantetheine 4'-phosphoryl)serine (Ser-854). Positions 949 to 1336 (TFIFRLSGPV…IIRFLDSPDS (388 aa)) are condensation.

The protein belongs to the NRP synthetase family.

The catalysed reaction is 7beta,14,16-trihydroxyconfertifolin + benzoate + H(+) = dideacetyl astellolide A + H2O. The enzyme catalyses 7beta,14,16-trihydroxyconfertifolin + 4-hydroxybenzoate + H(+) = dideacetyl astellolide B + H2O. The protein operates within secondary metabolite biosynthesis; terpenoid biosynthesis. Its function is as follows. Nonribosomal peptide synthetase; part of the gene cluster that mediates the biosynthesis of astellolides, drimane-type sesquiterpene esters that show antimicrobial, anti-inflammatory, and anti-tumor activities. The first step in astellolide biosynthesis is performed by the sesquiterpene cyclase astC that catalyzes the formation of drimanyl pyrophosphate from farnesyl pyrophosphate. Drimanyl pyrophosphate is then dephosphorylated by the sesquiterpene phosphatase astI to produce drimanyl monophosphate which is further dephosphorylated to drim-8-ene-11-ol by atsK. Drim-8-ene-11-ol is converted to confertifolin, probably by the cytochrome P450 monooxygenase astD and/or the dehydrogenase astE. The cytochrome P450 monooxygenases astB, astF and astJ then hydroxylate confertifolin at C6, C14, or C15 to form trihydroxy confertifolin. The nonribosomal peptide synthetase astA catalyzes ester bond formation between trihydroxy contifolin and benzoic acid (BA) or 4-hydroxy benzoic acid (4HBA), leading to the formation of dideacetyl astellolides A and B, respectively. Finally, the O-acetyltransferase astG converts dideacetyl astellolides A and B into deacetyl astellolides A and B. This chain is Nonribosomal peptide synthetase astA, found in Aspergillus oryzae (strain ATCC 42149 / RIB 40) (Yellow koji mold).